The sequence spans 191 residues: UPF0312 protein Sbal195_3198 (191 aa).

The N-terminal stretch at 1–22 (MKKQLFSALIGASLLAPMAASA) is a signal peptide.

This sequence belongs to the UPF0312 family. Type 1 subfamily.

The protein localises to the periplasm. The chain is UPF0312 protein Sbal195_3198 from Shewanella baltica (strain OS195).